The chain runs to 133 residues: Ribosome-binding factor A (133 aa).

This sequence belongs to the RbfA family. Monomer. Binds 30S ribosomal subunits, but not 50S ribosomal subunits or 70S ribosomes.

The protein localises to the cytoplasm. Its function is as follows. One of several proteins that assist in the late maturation steps of the functional core of the 30S ribosomal subunit. Associates with free 30S ribosomal subunits (but not with 30S subunits that are part of 70S ribosomes or polysomes). Required for efficient processing of 16S rRNA. May interact with the 5'-terminal helix region of 16S rRNA. This chain is Ribosome-binding factor A, found in Shigella boydii serotype 18 (strain CDC 3083-94 / BS512).